The following is a 58-amino-acid chain: UPF0339 protein Msl4696 (58 aa).

Belongs to the UPF0339 family.

In Mesorhizobium japonicum (strain LMG 29417 / CECT 9101 / MAFF 303099) (Mesorhizobium loti (strain MAFF 303099)), this protein is UPF0339 protein Msl4696.